A 433-amino-acid chain; its full sequence is Protein FAM98B (433 aa).

Residues 303 to 433 (GRVPDRGGRP…GGGGGGYRRY (131 aa)) form a disordered region. Positions 305-314 (VPDRGGRPNE) are enriched in basic and acidic residues. The segment covering 331-433 (GGGGRGGWGG…GGGGGGYRRY (103 aa)) has biased composition (gly residues).

This sequence belongs to the FAM98 family. Homodimer. Component of the tRNA-splicing ligase complex. Interacts with FAM98A. Expressed strongly in colorectal cancer tissues compared to wild-type colon samples (at protein level). Expressed strongly in colorectal cancer tissues compared to wild-type colon samples.

The protein resides in the nucleus. It is found in the cytoplasm. In terms of biological role, positively stimulates PRMT1-induced protein arginine dimethylated arginine methylation. The protein is Protein FAM98B (FAM98B) of Homo sapiens (Human).